The primary structure comprises 1207 residues: AP-3 complex subunit delta-1 (1207 aa).

At Ala2 the chain carries N-acetylalanine. 9 HEAT repeats span residues 34–71, 142–179, 180–216, 218–254, 257–296, 298–336, 337–373, 375–409, and 521–558; these read KYISQCIDEIKQELKQDNIAVKANAVCKLTYLQMLGYD, DLARDLANDIMTLMSHTKPYIRKKAVLIMYKVFLKYPE, SLRPAFPRLKEKLEDPDPGVQSAAVNVICELARRNPK, YLSLAPLFFKLMTSSTNNWVLIKIIKLFGALTPLEPR, KKLIEPLTNLIHSTSAMSLLYECVNTVIAVLISLSSGMPN, SASIQLCVQKLRILIEDSDQNLKYLGLLAMSKILRTHPK, SVQAHKDLVLQCLDDKDESIRLRALDLLYGMVSKKNL, EIVKKLMTHVDKAEGTTYRDELLTKIIDICSQSNY, and VYVQNVVKLYAAILQQKEQAADTSAAQEVTQLLVERLP. 2 disordered regions span residues 630 to 695 and 731 to 970; these read PLSD…RYQD and RRHR…EEPL. Phosphoserine occurs at positions 632, 634, and 636. The segment covering 648-675 has biased composition (basic and acidic residues); sequence EEQRHTKPRAPEADEQELARRREARRQE. The stretch at 659 to 679 forms a coiled coil; that stretch reads EADEQELARRREARRQEQANN. Ser688 bears the Phosphoserine mark. Residues 725-752 adopt a coiled-coil conformation; it reads VKLEEERRHRQRLEKDKRKKKKRERERR. The span at 731–740 shows a compositional bias: basic and acidic residues; that stretch reads RRHRQRLEKD. The span at 741–759 shows a compositional bias: basic residues; the sequence is KRKKKKRERERRGTRRHSS. Phosphoserine occurs at positions 758 and 759. Thr762 carries the phosphothreonine modification. Ser764, Ser788, and Ser829 each carry phosphoserine. A compositionally biased stretch (acidic residues) spans 777–794; sequence VTEEMPENALPSDEDDKD. Basic and acidic residues predominate over residues 795-840; the sequence is PNDPYRALDIDLDKPLADSEKLPVQKHRNAETSKSPEKEDVPLVEK. Residues 841–854 show a composition bias toward basic residues; that stretch reads KSKKPKKKEKKHKE. Residues 846–870 are a coiled coil; that stretch reads KKKEKKHKEKEREKKKKEVEKGEDL. 2 stretches are compositionally biased toward basic and acidic residues: residues 855–869 and 899–908; these read KEREKKKKEVEKGED and EGQEEPRGEE. The segment covering 923–933 has biased composition (basic residues); the sequence is PSKHKKKKHKK. Positions 952-969 are enriched in acidic residues; it reads ADEEAAEPVENGTLEEEP.

It belongs to the adaptor complexes large subunit family. In terms of assembly, AP-3 associates with the BLOC-1 complex. Adaptor protein complex 3 (AP-3) is a heterotetramer composed of two large adaptins (delta-type subunit AP3D1 and beta-type subunit AP3B1 or AP3B2), a medium adaptin (mu-type subunit AP3M1 or AP3M2) and a small adaptin (sigma-type subunit APS1 or AP3S2). Interacts with SLC30A2. Interacts with CLN3 (via dileucine motif); this interaction facilitates lysosomal targeting.

It is found in the cytoplasm. Its subcellular location is the golgi apparatus membrane. Its function is as follows. Part of the AP-3 complex, an adaptor-related complex which is not clathrin-associated. The complex is associated with the Golgi region as well as more peripheral structures. It facilitates the budding of vesicles from the Golgi membrane and may be directly involved in trafficking to lysosomes. Involved in process of CD8+ T-cell and NK cell degranulation. In concert with the BLOC-1 complex, AP-3 is required to target cargos into vesicles assembled at cell bodies for delivery into neurites and nerve terminals. This is AP-3 complex subunit delta-1 (AP3D1) from Bos taurus (Bovine).